Consider the following 291-residue polypeptide: Asialoglycoprotein receptor 1 (291 aa).

Residues M1–H19 show a composition bias toward basic and acidic residues. A disordered region spans residues M1–P27. The Cytoplasmic portion of the chain corresponds to M1 to R40. The short motif at C5–L8 is the Endocytosis signal element. Residue S16 is modified to Phosphoserine. A lipid anchor (S-palmitoyl cysteine) is attached at C36. The helical; Signal-anchor for type II membrane protein transmembrane segment at L41–S61 threads the bilayer. Positions S61–L123 form a coiled coil. Residues Q62–L291 lie on the Extracellular side of the membrane. N-linked (GlcNAc...) asparagine glycans are attached at residues N79 and N147. 3 disulfides stabilise this stretch: C154/C165, C182/C277, and C255/C269. The C-type lectin domain maps to H161–E278. Ca(2+) is bound by residues V191, E197, D216, Q240, D242, D243, E253, D254, N265, D266, and E278. The residue at position 285 (S285) is a Phosphoserine.

As to quaternary structure, interacts with LASS2. In terms of processing, phosphorylated on a cytoplasmic Ser residue.

Its subcellular location is the membrane. Its function is as follows. Mediates the endocytosis of plasma glycoproteins to which the terminal sialic acid residue on their complex carbohydrate moieties has been removed. The receptor recognizes terminal galactose and N-acetylgalactosamine units. After ligand binding to the receptor, the resulting complex is internalized and transported to a sorting organelle, where receptor and ligand are disassociated. The receptor then returns to the cell membrane surface. The polypeptide is Asialoglycoprotein receptor 1 (ASGR1) (Pongo abelii (Sumatran orangutan)).